The following is a 333-amino-acid chain: Cell division protein FtsQ (333 aa).

Residues 1–99 form a disordered region; it reads MTGTGPHGDP…ARREAKRRAV (99 aa). Residues 1–118 are Cytoplasmic-facing; that stretch reads MTGTGPHGDP…VPRNTIRGLK (118 aa). The segment covering 11 to 22 has biased composition (acidic residues); it reads AEDPAGPDDTAA. Residues 44–57 show a composition bias toward low complexity; that stretch reads TTETTAQTGTTAEA. Basic and acidic residues predominate over residues 73 to 92; that stretch reads ERAERRAARDRAMAIEQARR. Residues 119 to 139 form a helical membrane-spanning segment; that stretch reads VLMWAALVSVLAVALGLLLYF. The Extracellular portion of the chain corresponds to 140–333; the sequence is TPIMSARNVE…VSSPDLPTVK (194 aa). One can recognise a POTRA domain in the interval 143–211; the sequence is MSARNVEVSG…STLKISIVER (69 aa).

This sequence belongs to the FtsQ/DivIB family. FtsQ subfamily.

The protein localises to the cell membrane. In terms of biological role, essential cell division protein. In Mycolicibacterium smegmatis (strain ATCC 700084 / mc(2)155) (Mycobacterium smegmatis), this protein is Cell division protein FtsQ.